Here is a 609-residue protein sequence, read N- to C-terminus: Zinc metalloproteinase-disintegrin-like VAP2B (609 aa).

A signal peptide spans 1 to 20 (MIQVLLVTICLAAFPYQGSS). Residues 21–189 (IILESGNVND…KKASQLVVTA (169 aa)) constitute a propeptide that is removed on maturation. At glutamate 190 the chain carries Pyrrolidone carboxylic acid (Glu). Residues 198 to 393 (RFVELFLVVD…HNPECILNEP (196 aa)) form the Peptidase M12B domain. Ca(2+) is bound by residues glutamate 201 and aspartate 285. 3 disulfide bridges follow: cysteine 308–cysteine 388, cysteine 348–cysteine 372, and cysteine 350–cysteine 355. Histidine 333 contributes to the Zn(2+) binding site. The active site involves glutamate 334. Zn(2+)-binding residues include histidine 337 and histidine 343. The N-linked (GlcNAc...) asparagine glycan is linked to asparagine 371. Ca(2+)-binding residues include cysteine 388, asparagine 391, valine 403, asparagine 406, leucine 408, glutamate 410, glutamate 413, and aspartate 416. The region spanning 401 to 487 (PPVCGNELLE…ECPADVFHKN (87 aa)) is the Disintegrin domain. 22 disulfides stabilise this stretch: cysteine 404–cysteine 423, cysteine 404–cysteine 433, cysteine 415–cysteine 428, cysteine 415–cysteine 433, cysteine 417–cysteine 423, cysteine 427–cysteine 450, cysteine 441–cysteine 447, cysteine 446–cysteine 472, cysteine 459–cysteine 479, cysteine 466–cysteine 491, cysteine 466–cysteine 498, cysteine 491–cysteine 503, cysteine 498–cysteine 503, cysteine 510–cysteine 525, cysteine 510–cysteine 560, cysteine 525–cysteine 571, cysteine 538–cysteine 548, cysteine 548–cysteine 555, cysteine 555–cysteine 597, cysteine 560–cysteine 571, cysteine 591–cysteine 602, and cysteine 597–cysteine 602. Positions 459–472 (CRASMSECDPAEHC) are inhibits platelet aggregation. The short motif at 465-467 (ECD) is the D/ECD-tripeptide element. 5 residues coordinate Ca(2+): aspartate 467, proline 468, glutamate 470, aspartate 482, and valine 483.

Belongs to the venom metalloproteinase (M12B) family. P-III subfamily. P-IIIb sub-subfamily. In terms of assembly, monomer or heterodimer; non-covalently linked. Interacts with fibrillar collagen. Zn(2+) serves as cofactor. The N-terminus is blocked. Expressed by the venom gland.

The protein resides in the secreted. Functionally, zinc metalloprotease that abolishes platelet aggregation induced by collagen, but has no effect on platelet aggregation induced by ADP or thromboxane analog. This inhibition may be due to its ability to bind collagen and block the binding site on collagen for platelets and/or to its ability to bind to the platelet alpha-2/beta-1 collagen receptor (ITGA2/ITGB1) to block its interaction with collagen and hence prevent platelet stimulation. Its function is as follows. Abolishes platelet aggregation induced by collagen (IC(50)=66 nM) but not ADP-stimulated platelet aggregation. This inhibition may be due to its ability to bind collagen and block the binding site on collagen for platelets and/or to its ability to bind to the platelet alpha-2/beta-1 collagen receptor (ITGA2/ITGB1) to block its interaction with collagen and hence prevent platelet stimulation. The protein is Zinc metalloproteinase-disintegrin-like VAP2B of Crotalus atrox (Western diamondback rattlesnake).